The following is a 226-amino-acid chain: Putative O-methyltransferase Mvan_4497 (226 aa).

Residues V53, E75, 77 to 78 (GT), S83, D101, and V102 contribute to the S-adenosyl-L-methionine site. D149 serves as a coordination point for substrate.

Belongs to the class I-like SAM-binding methyltransferase superfamily. Cation-dependent O-methyltransferase family.

The chain is Putative O-methyltransferase Mvan_4497 from Mycolicibacterium vanbaalenii (strain DSM 7251 / JCM 13017 / BCRC 16820 / KCTC 9966 / NRRL B-24157 / PYR-1) (Mycobacterium vanbaalenii).